We begin with the raw amino-acid sequence, 212 residues long: Hemagglutinin 2 (212 aa).

The protein resides in the secreted. Functionally, induces agglutination of neuraminidase-treated erythrocytes. This Eikenella corrodens protein is Hemagglutinin 2 (hag2).